A 348-amino-acid chain; its full sequence is Phospho-N-acetylmuramoyl-pentapeptide-transferase (348 aa).

The next 10 membrane-spanning stretches (helical) occupy residues 11-31 (SWMLLLATVFGLAFFLGIFLG), 68-88 (AGGILFCIVLLTTVFLWLPLG), 92-112 (TWLFVFLIISWGTLGWYDDII), 128-148 (FVIQLIISAITIVTIFSIYKG), 165-185 (VGHSILGKFFYFVLAMLTIVG), 196-216 (LDGLAAGTTCMSALGLLVVAL), 222-242 (PLAQDVSIVLSALIGISFAFL), 251-271 (VFMGDTGSLLIGGVLGSCAVM), 276-296 (LLLILLGGVFVAEAGSVILQV), and 326-346 (VVARFYIAGLLCMILGIIAAL).

The protein belongs to the glycosyltransferase 4 family. MraY subfamily. The cofactor is Mg(2+).

It is found in the cell inner membrane. The catalysed reaction is UDP-N-acetyl-alpha-D-muramoyl-L-alanyl-gamma-D-glutamyl-meso-2,6-diaminopimeloyl-D-alanyl-D-alanine + di-trans,octa-cis-undecaprenyl phosphate = di-trans,octa-cis-undecaprenyl diphospho-N-acetyl-alpha-D-muramoyl-L-alanyl-D-glutamyl-meso-2,6-diaminopimeloyl-D-alanyl-D-alanine + UMP. The protein operates within cell wall biogenesis; peptidoglycan biosynthesis. Functionally, catalyzes the initial step of the lipid cycle reactions in the biosynthesis of the cell wall peptidoglycan: transfers peptidoglycan precursor phospho-MurNAc-pentapeptide from UDP-MurNAc-pentapeptide onto the lipid carrier undecaprenyl phosphate, yielding undecaprenyl-pyrophosphoryl-MurNAc-pentapeptide, known as lipid I. The chain is Phospho-N-acetylmuramoyl-pentapeptide-transferase from Chlamydia caviae (strain ATCC VR-813 / DSM 19441 / 03DC25 / GPIC) (Chlamydophila caviae).